The primary structure comprises 634 residues: Chaperone protein dnaK2 (634 aa).

The residue at position 197 (Thr197) is a Phosphothreonine; by autocatalysis. Low complexity predominate over residues 601 to 620 (SAEASANAQAGPSSSSSSSS). The disordered stretch occupies residues 601–634 (SAEASANAQAGPSSSSSSSSGDDDVIDAEFSESK). Residues 621 to 634 (GDDDVIDAEFSESK) show a composition bias toward acidic residues.

This sequence belongs to the heat shock protein 70 family.

In terms of biological role, acts as a chaperone. This Synechococcus elongatus (strain ATCC 33912 / PCC 7942 / FACHB-805) (Anacystis nidulans R2) protein is Chaperone protein dnaK2 (dnaK2).